We begin with the raw amino-acid sequence, 723 residues long: Tryptophan 2-monooxygenase (723 aa).

FMN contacts are provided by serine 218, glutamate 238, arginine 246, and arginine 266. Arginine 266 is a binding site for substrate.

The protein belongs to the tryptophan 2-monooxygenase family. Requires FMN as cofactor.

The catalysed reaction is L-tryptophan + O2 = indole-3-acetamide + CO2 + H2O. It functions in the pathway plant hormone metabolism; auxin biosynthesis. The sequence is that of Tryptophan 2-monooxygenase (iaaM) from Allorhizobium ampelinum (strain ATCC BAA-846 / DSM 112012 / S4) (Agrobacterium vitis (strain S4)).